A 257-amino-acid polypeptide reads, in one-letter code: Imidazole glycerol phosphate synthase subunit HisF (257 aa).

Active-site residues include Asp12 and Asp131.

It belongs to the HisA/HisF family. Heterodimer of HisH and HisF.

The protein localises to the cytoplasm. The catalysed reaction is 5-[(5-phospho-1-deoxy-D-ribulos-1-ylimino)methylamino]-1-(5-phospho-beta-D-ribosyl)imidazole-4-carboxamide + L-glutamine = D-erythro-1-(imidazol-4-yl)glycerol 3-phosphate + 5-amino-1-(5-phospho-beta-D-ribosyl)imidazole-4-carboxamide + L-glutamate + H(+). Its pathway is amino-acid biosynthesis; L-histidine biosynthesis; L-histidine from 5-phospho-alpha-D-ribose 1-diphosphate: step 5/9. IGPS catalyzes the conversion of PRFAR and glutamine to IGP, AICAR and glutamate. The HisF subunit catalyzes the cyclization activity that produces IGP and AICAR from PRFAR using the ammonia provided by the HisH subunit. This is Imidazole glycerol phosphate synthase subunit HisF from Burkholderia lata (strain ATCC 17760 / DSM 23089 / LMG 22485 / NCIMB 9086 / R18194 / 383).